We begin with the raw amino-acid sequence, 512 residues long: SNF1-related protein kinase catalytic subunit alpha KIN11 (512 aa).

The Protein kinase domain occupies 20–272 (YKLGKTLGIG…IPEIRQHRWF (253 aa)). Residues 26-34 (LGIGSFGKV) and Lys-49 each bind ATP. Asp-143 (proton acceptor) is an active-site residue. Position 165 is a phosphoserine (Ser-165). The residue at position 176 (Thr-176) is a Phosphothreonine; by GRIK1 or GRIK2. The auto-inhibitory domain (AID) stretch occupies residues 291–391 (AKKINEEIVQ…GARSQVPVDR (101 aa)). Positions 293-333 (KINEEIVQEVVNMGFDRNQVLESLRNRTQNDATVTYYLLLD) constitute a UBA domain. The interval 295-512 (NEEIVQEVVN…AAFLTELRVI (218 aa)) is regulatory domain (RD). The segment at 392 to 512 (KWALGLQSHA…AAFLTELRVI (121 aa)) is PPI. Residues 399-512 (SHAHPREIMN…AAFLTELRVI (114 aa)) are interaction with PAD1 and SKP1. The KA1 domain maps to 463–511 (AMTSPTVIKFELQLYKAREEKYLLDIQRVNGPQFLFLDLCAAFLTELRV).

This sequence belongs to the protein kinase superfamily. CAMK Ser/Thr protein kinase family. SNF1 subfamily. Subunit of a probable heterotrimeric complex consisting of an alpha catalytic (KIN10 or KIN11) subunit, and a beta (KINB) and a gamma (KING or SNF4) non-catalytic regulatory subunits. Interacts with KINB2, KINB3, SNF4 and probably with KINB1 and KING1. Interacts with SKP1/ASK1, PAD1 and the N-terminus of PRL1. Potential subunit of a SCF ubiquitin ligase complex consisting of a SNF1-related protein kinase, SKP1 and CUL1. The association of the SCF complex with the proteasome may be mediated by PAD1 and seems to be inhibited by the interaction with PRL1. Interacts with DSP4. Interacts with the begomovirus AL2 protein and the curtovirus L2 protein. Interacts with ATAF1. Interacts with CIPK14. Interacts with FLZ proteins through their FLZ-type zinc finger domains. Interacts with GEBP/STKR1. Interacts with REM4.1 and REM4.2. Interacts with ADK2. Interacts with IDD8. Interacts with FLZ3, FLZ9, TCP3, TCP13, HB21/ZHD3 and HB23/ZHD10. Interacts with WRI1. Interacts with IPK2b. Interacts with FLZ6 and FLZ10. Sumoylated by SIZ1. In terms of processing, phosphorylated at Thr-176 under submergence. Autophosphorylated. Phosphorylated at Thr-176 by GRIK1/SNAK2 and GRIK2/SNAK1. As to expression, expressed in roots, shoots, flower buds, flowers, siliques and leaves. Restrictly expressed to the base of the leaf, the vascular tissue, and the hydathodes.

It is found in the plastid. The protein resides in the chloroplast. It localises to the cytoplasm. The protein localises to the endoplasmic reticulum. It catalyses the reaction L-seryl-[protein] + ATP = O-phospho-L-seryl-[protein] + ADP + H(+). It carries out the reaction L-threonyl-[protein] + ATP = O-phospho-L-threonyl-[protein] + ADP + H(+). Its activity is regulated as follows. Inactivated by the begomovirus AL2 protein or the curtovirus L2 protein. Activated by phosphorylation at Thr-176 by GRIK1/SNAK2 and GRIK2/SNAK1. Inhibited by trehalose-6-phosphate. Its function is as follows. Catalytic subunit of the probable trimeric SNF1-related protein kinase (SnRK) complex, a central regulator of cellular energy homeostasis, which, in response to seemingly unrelated darkness, sugar and stress conditions, activates energy-producing pathways and inhibits energy-consuming processes. May play a role in a signal transduction cascade regulating gene expression and carbohydrate metabolism in higher plants. The SnRK complex may also be involved in the regulation of fatty acid synthesis by phosphorylation of acetyl-CoA carboxylase and in assimilation of nitrogen by phosphorylating nitrate reductase. In vitro, KIN11 exhibits kinase activity on sucrose phosphate synthase and the kinase activity is inhibited by PRL1. May be a subunit of a SCF ubiquitin ligase complex and thus be involved in proteasomal ubiquitination. Involved in innate antiviral defenses. Phosphorylates REM4.1 in vitro. Phosphorylates ADK2 in vitro. The sequence is that of SNF1-related protein kinase catalytic subunit alpha KIN11 from Arabidopsis thaliana (Mouse-ear cress).